Consider the following 294-residue polypeptide: Complement C1q tumor necrosis factor-related protein 2 (294 aa).

The N-terminal stretch at 1 to 24 (MTIFKKVTTMISWVLLACALPCAA) is a signal peptide. Residues 42-156 (QLVCSLPGPQ…PGPCSCGSSR (115 aa)) are disordered. Positions 48 to 150 (PGPQGPPGPP…KGEPGLPGPC (103 aa)) constitute a Collagen-like domain. Positions 50–59 (PQGPPGPPGA) are enriched in pro residues. The span at 75–87 (DGQDGQDGDRGDS) shows a compositional bias: basic and acidic residues. Over residues 105-129 (KGKAGAIGRAGPRGPKGVSGTPGKH) the composition is skewed to low complexity. The C1q domain occupies 154–290 (SSRAKSAFSV…GFLIYADQGD (137 aa)).

As to quaternary structure, may interact with ERFE.

It localises to the secreted. In terms of biological role, involved in the regulation of lipid metabolism in adipose tissue and liver. This is Complement C1q tumor necrosis factor-related protein 2 (C1qtnf2) from Mus musculus (Mouse).